Reading from the N-terminus, the 200-residue chain is Ras-related protein Rab-7b (200 aa).

Residues 15–22 (GALGVGKT), 34–40 (YEDYQTT), 63–67 (DTGGQ), 124–127 (NKID), and 154–155 (AK) each bind GTP. 2 consecutive short sequence motifs (switch) follow at residues 28–41 (YVHK…QTTL) and 67–82 (QERF…KGSD). S186 carries the phosphoserine modification. Residues C199 and C200 are each lipidated (S-geranylgeranyl cysteine).

This sequence belongs to the small GTPase superfamily. Rab family.

The protein localises to the late endosome. It is found in the lysosome. Its subcellular location is the golgi apparatus. It localises to the trans-Golgi network. The protein resides in the cytoplasmic vesicle. The protein localises to the phagosome. It is found in the phagosome membrane. In terms of biological role, controls vesicular trafficking from endosomes to the trans-Golgi network (TGN). Acts as a negative regulator of TLR9 signaling and can suppress TLR9-triggered TNFA, IL6, and IFNB production in macrophages by promoting TLR9 lysosomal degradation. Also negatively regulates TLR4 signaling in macrophages by promoting lysosomal degradation of TLR4. Promotes megakaryocytic differentiation by increasing NF-kappa-B-dependent IL6 production and subsequently enhancing the association of STAT3 with GATA1. Not involved in the regulation of the EGF- and EGFR degradation pathway. The polypeptide is Ras-related protein Rab-7b (RAB7B) (Bos taurus (Bovine)).